The following is a 417-amino-acid chain: MNIYAVGGAIRDELLGMPVQDRDYVVVGATPEQMIAQGFRPVGKDFPVFLHPDTQEEYALARTERKTSAGYHGFQFFYAPDVTLEDDLARRDLTINAMAREVTPDGALIGPVIDPFNGREDLEHRVFRHVSDAFLEDPVRILRVARFSARFADFSVAPETLALMRKMVEAGEVDALVPERVWQEVSRGLMEKKPSRMFEVLRDCGALARVLPEIDALYGVPQRADYHPEVDTGVHVMMVVDHAAAQNYALAVRFAALTHDLGKATTPEDVLPRHIGHEGRSVDLLKPLCERLRVPNECRDLALLVAREHGNIHRVMETKAAGLVRLFERSDALRKPARFAEALQACEADARGRLGFEANAYPQAERLRQALVAARAVDAGAVAKSYENSPAEIKDAVHRERVRAVAKALNEAPSGQA.

ATP is bound by residues G8 and R11. Residues G8 and R11 each contribute to the CTP site. Mg(2+) is bound by residues D21 and D23. ATP-binding residues include R91, R143, and R146. 3 residues coordinate CTP: R91, R143, and R146. The HD domain maps to 232–333; that stretch reads TGVHVMMVVD…VRLFERSDAL (102 aa).

Belongs to the tRNA nucleotidyltransferase/poly(A) polymerase family. Bacterial CCA-adding enzyme type 1 subfamily. As to quaternary structure, monomer. Can also form homodimers and oligomers. Mg(2+) serves as cofactor. It depends on Ni(2+) as a cofactor.

It carries out the reaction a tRNA precursor + 2 CTP + ATP = a tRNA with a 3' CCA end + 3 diphosphate. The catalysed reaction is a tRNA with a 3' CCA end + 2 CTP + ATP = a tRNA with a 3' CCACCA end + 3 diphosphate. In terms of biological role, catalyzes the addition and repair of the essential 3'-terminal CCA sequence in tRNAs without using a nucleic acid template. Adds these three nucleotides in the order of C, C, and A to the tRNA nucleotide-73, using CTP and ATP as substrates and producing inorganic pyrophosphate. tRNA 3'-terminal CCA addition is required both for tRNA processing and repair. Also involved in tRNA surveillance by mediating tandem CCA addition to generate a CCACCA at the 3' terminus of unstable tRNAs. While stable tRNAs receive only 3'-terminal CCA, unstable tRNAs are marked with CCACCA and rapidly degraded. In Paraburkholderia phymatum (strain DSM 17167 / CIP 108236 / LMG 21445 / STM815) (Burkholderia phymatum), this protein is Multifunctional CCA protein.